A 154-amino-acid polypeptide reads, in one-letter code: Myoglobin (154 aa).

In terms of domain architecture, Globin spans 2 to 148 (GLSDQEWQQV…FRNDMASKYK (147 aa)). His-65 contacts nitrite. His-65 is an O2 binding site. Residue His-94 coordinates heme b.

Belongs to the globin family. As to quaternary structure, monomeric.

Its subcellular location is the cytoplasm. It is found in the sarcoplasm. It carries out the reaction Fe(III)-heme b-[protein] + nitric oxide + H2O = Fe(II)-heme b-[protein] + nitrite + 2 H(+). It catalyses the reaction H2O2 + AH2 = A + 2 H2O. Functionally, monomeric heme protein which primary function is to store oxygen and facilitate its diffusion within muscle tissues. Reversibly binds oxygen through a pentacoordinated heme iron and enables its timely and efficient release as needed during periods of heightened demand. Depending on the oxidative conditions of tissues and cells, and in addition to its ability to bind oxygen, it also has a nitrite reductase activity whereby it regulates the production of bioactive nitric oxide. Under stress conditions, like hypoxia and anoxia, it also protects cells against reactive oxygen species thanks to its pseudoperoxidase activity. In Gallus gallus (Chicken), this protein is Myoglobin (MB).